Reading from the N-terminus, the 251-residue chain is Probable transcriptional regulatory protein Amuc_0709 (251 aa).

This sequence belongs to the TACO1 family.

It localises to the cytoplasm. This chain is Probable transcriptional regulatory protein Amuc_0709, found in Akkermansia muciniphila (strain ATCC BAA-835 / DSM 22959 / JCM 33894 / BCRC 81048 / CCUG 64013 / CIP 107961 / Muc).